The chain runs to 196 residues: Peptidyl-tRNA hydrolase (196 aa).

Residue Tyr18 coordinates tRNA. His23 serves as the catalytic Proton acceptor. Residues Phe69, Asn71, and Asn117 each coordinate tRNA.

This sequence belongs to the PTH family. In terms of assembly, monomer.

It localises to the cytoplasm. It catalyses the reaction an N-acyl-L-alpha-aminoacyl-tRNA + H2O = an N-acyl-L-amino acid + a tRNA + H(+). Functionally, hydrolyzes ribosome-free peptidyl-tRNAs (with 1 or more amino acids incorporated), which drop off the ribosome during protein synthesis, or as a result of ribosome stalling. Catalyzes the release of premature peptidyl moieties from peptidyl-tRNA molecules trapped in stalled 50S ribosomal subunits, and thus maintains levels of free tRNAs and 50S ribosomes. The polypeptide is Peptidyl-tRNA hydrolase (Vibrio campbellii (strain ATCC BAA-1116)).